The following is a 469-amino-acid chain: Melanopsin (469 aa).

Topologically, residues 1–71 are extracellular; it reads MDSPPGPTAP…VDVPDHAHYI (71 aa). The N-linked (GlcNAc...) asparagine glycan is linked to Asn-30. The helical transmembrane segment at 72–92 threads the bilayer; the sequence is LGTVILLVGLTGMLGNLTVIY. Residues 93–106 lie on the Cytoplasmic side of the membrane; the sequence is TFCRSRSLRTPANM. Residues 107-127 form a helical membrane-spanning segment; it reads LIINLAVSDFLMSFTQAPVFF. Topologically, residues 128-143 are extracellular; that stretch reads ASSLYKKWLFGETGCE. Cys-142 and Cys-220 form a disulfide bridge. A helical membrane pass occupies residues 144 to 164; it reads FYAFCGAVLGITSMITLTAIA. Over 165-187 the chain is Cytoplasmic; sequence LDRYLVITRPLATIGMGSKRRTA. Residues 188-208 form a helical membrane-spanning segment; that stretch reads LVLLGIWLYALAWSLPPFFGW. Residues 209–237 lie on the Extracellular side of the membrane; sequence SAYVPEGLLTSCSWDYVTFTPQVRAYTML. The chain crosses the membrane as a helical span at residues 238–258; the sequence is LFCFVFFLPLLVIIFCYISIF. Topologically, residues 259–295 are cytoplasmic; sequence RAIRETGRACEGWSESPQRRRQWHRLQSEWKMAKVAL. The chain crosses the membrane as a helical span at residues 296-316; that stretch reads IVILLFVLSWAPYSTVALVAF. Residues 317-328 lie on the Extracellular side of the membrane; the sequence is AGYSHILTPYMS. A helical transmembrane segment spans residues 329–349; it reads SVPAVIAKASAIHNPIVYAIT. Lys-336 bears the N6-(retinylidene)lysine mark. Over 350–469 the chain is Cytoplasmic; sequence HPKYRAAIAQ…SLDLGMQDAP (120 aa). The tract at residues 409 to 469 is disordered; that stretch reads GSESEVGWTD…SLDLGMQDAP (61 aa).

Belongs to the G-protein coupled receptor 1 family. Opsin subfamily.

Its subcellular location is the cell membrane. The protein localises to the cell projection. It localises to the axon. The protein resides in the dendrite. It is found in the perikaryon. In terms of biological role, photoreceptor that binds cis-retinaldehydes. Contributes to pupillar reflex, photoentrainment and other non-image forming responses to light. May be involved in the optokinetic visual tracking response. May be involved in the regulation of retinal hyaloid vessel growth and regression. The chain is Melanopsin (OPN4) from Phodopus sungorus (Striped hairy-footed hamster).